A 132-amino-acid polypeptide reads, in one-letter code: Small ribosomal subunit protein uS8c (132 aa).

Belongs to the universal ribosomal protein uS8 family. In terms of assembly, part of the 30S ribosomal subunit.

The protein localises to the plastid. It is found in the chloroplast. In terms of biological role, one of the primary rRNA binding proteins, it binds directly to 16S rRNA central domain where it helps coordinate assembly of the platform of the 30S subunit. This Huperzia lucidula (Shining clubmoss) protein is Small ribosomal subunit protein uS8c (rps8).